The following is a 574-amino-acid chain: Proline--tRNA ligase (574 aa).

The protein belongs to the class-II aminoacyl-tRNA synthetase family. ProS type 1 subfamily. As to quaternary structure, homodimer.

The protein localises to the cytoplasm. The enzyme catalyses tRNA(Pro) + L-proline + ATP = L-prolyl-tRNA(Pro) + AMP + diphosphate. Catalyzes the attachment of proline to tRNA(Pro) in a two-step reaction: proline is first activated by ATP to form Pro-AMP and then transferred to the acceptor end of tRNA(Pro). As ProRS can inadvertently accommodate and process non-cognate amino acids such as alanine and cysteine, to avoid such errors it has two additional distinct editing activities against alanine. One activity is designated as 'pretransfer' editing and involves the tRNA(Pro)-independent hydrolysis of activated Ala-AMP. The other activity is designated 'posttransfer' editing and involves deacylation of mischarged Ala-tRNA(Pro). The misacylated Cys-tRNA(Pro) is not edited by ProRS. This is Proline--tRNA ligase from Nitratidesulfovibrio vulgaris (strain ATCC 29579 / DSM 644 / CCUG 34227 / NCIMB 8303 / VKM B-1760 / Hildenborough) (Desulfovibrio vulgaris).